The primary structure comprises 144 residues: 3-dehydroquinate dehydratase (144 aa).

Catalysis depends on Tyr-24, which acts as the Proton acceptor. Asn-76, His-82, and Asp-89 together coordinate substrate. His-102 functions as the Proton donor in the catalytic mechanism. Substrate-binding positions include Leu-103–Ser-104 and Arg-113.

This sequence belongs to the type-II 3-dehydroquinase family. As to quaternary structure, homododecamer.

It catalyses the reaction 3-dehydroquinate = 3-dehydroshikimate + H2O. It functions in the pathway metabolic intermediate biosynthesis; chorismate biosynthesis; chorismate from D-erythrose 4-phosphate and phosphoenolpyruvate: step 3/7. Functionally, catalyzes a trans-dehydration via an enolate intermediate. This Nitrosomonas europaea (strain ATCC 19718 / CIP 103999 / KCTC 2705 / NBRC 14298) protein is 3-dehydroquinate dehydratase.